The chain runs to 361 residues: tRNA-specific 2-thiouridylase MnmA (361 aa).

ATP contacts are provided by residues 9 to 16 (GMSGGVDS) and methionine 35. Residues 95-97 (NPD) form an interaction with target base in tRNA region. The active-site Nucleophile is the cysteine 100. A disulfide bridge links cysteine 100 with cysteine 196. Glycine 124 provides a ligand contact to ATP. The segment at 146-148 (KDQ) is interaction with tRNA. Residue cysteine 196 is the Cysteine persulfide intermediate of the active site. The segment at 308-309 (RY) is interaction with tRNA.

The protein belongs to the MnmA/TRMU family.

Its subcellular location is the cytoplasm. The enzyme catalyses S-sulfanyl-L-cysteinyl-[protein] + uridine(34) in tRNA + AH2 + ATP = 2-thiouridine(34) in tRNA + L-cysteinyl-[protein] + A + AMP + diphosphate + H(+). Functionally, catalyzes the 2-thiolation of uridine at the wobble position (U34) of tRNA, leading to the formation of s(2)U34. The polypeptide is tRNA-specific 2-thiouridylase MnmA (Nitrosomonas eutropha (strain DSM 101675 / C91 / Nm57)).